The sequence spans 461 residues: Phosphoglycerate kinase, chloroplastic (461 aa).

The transit peptide at 1–60 (MALSMKMRANARVSGRRVAAVAPRVVPFSSASSSVLRSGFALRCLWTSAAWAALASVVEA) directs the protein to the chloroplast. Residues alanine 82, aspartate 83, asparagine 85, arginine 100, serine 122, histidine 123, glycine 125, arginine 126, arginine 182, histidine 214, and arginine 215 each coordinate (2R)-3-phosphoglycerate. Glycine 260 is a binding site for ADP. Glycine 260 serves as a coordination point for CDP. The AMP site is built by lysine 262 and lysine 266. Lysine 266 serves as a coordination point for ATP. Glycine 284 contributes to the ADP binding site. Position 284 (glycine 284) interacts with CDP. 2 residues coordinate AMP: glycine 285 and glycine 357. ATP contacts are provided by glycine 285 and glycine 357. CDP-binding residues include glycine 382 and phenylalanine 387. An ADP-binding site is contributed by phenylalanine 387. Residue glutamate 388 participates in AMP binding. 3 residues coordinate ATP: glutamate 388, aspartate 419, and serine 420. Aspartate 419 is a binding site for Mg(2+).

Belongs to the phosphoglycerate kinase family. Monomer. Mg(2+) serves as cofactor.

The protein localises to the plastid. Its subcellular location is the chloroplast. The catalysed reaction is (2R)-3-phosphoglycerate + ATP = (2R)-3-phospho-glyceroyl phosphate + ADP. It functions in the pathway carbohydrate biosynthesis; Calvin cycle. The polypeptide is Phosphoglycerate kinase, chloroplastic (Chlamydomonas reinhardtii (Chlamydomonas smithii)).